The following is a 338-amino-acid chain: uncharacterized protein (338 aa).

Residues Met1–Ala29 form the signal peptide.

The protein belongs to the aerolysin family.

This is an uncharacterized protein from Staphylococcus aureus (strain bovine RF122 / ET3-1).